Here is a 453-residue protein sequence, read N- to C-terminus: Crh-like protein CRH11 (453 aa).

Positions 1-21 (MKFTTLATIASTLLFAANANA) are cleaved as a signal peptide. Cysteines 24 and 32 form a disulfide. In terms of domain architecture, GH16 spans 28-227 (KSSDCSPVPA…WAGGITDYSQ (200 aa)). Residue glutamate 119 is the Nucleophile of the active site. The active-site Proton donor is glutamate 123. Residues glutamate 123, tryptophan 204, and threonine 215 each coordinate chitin. 3 disordered regions span residues 281–343 (LESG…SEKS), 362–397 (KTTV…PASA), and 410–430 (GDAA…TENN). 3 stretches are compositionally biased toward low complexity: residues 286–343 (SVDS…SEKS), 363–397 (TTVT…PASA), and 412–425 (AAPS…PSVS). N-linked (GlcNAc...) asparagine glycosylation occurs at asparagine 290. The GPI-anchor amidated asparagine moiety is linked to residue asparagine 430. A propeptide spans 431 to 453 (GAVSVAKTTSLFGFVALIGFLFV) (removed in mature form).

This sequence belongs to the glycosyl hydrolase 16 family. CRH1 subfamily. The GPI-anchor is attached to the protein in the endoplasmic reticulum and serves to target the protein to the cell surface. There, the glucosamine-inositol phospholipid moiety is cleaved off and the GPI-modified mannoprotein is covalently attached via its lipidless GPI glycan remnant to the 1,6-beta-glucan of the outer cell wall layer.

The protein resides in the secreted. It is found in the cell wall. Its subcellular location is the membrane. The catalysed reaction is Random endo-hydrolysis of N-acetyl-beta-D-glucosaminide (1-&gt;4)-beta-linkages in chitin and chitodextrins.. Dual chitinase/transglycosylase that plays a role in cell wall architecture. Chitinase and transglycosylase activities are coupled. Required for the polysaccharide cross-linking at the septa and the cell wall. More specifically, transfers chitin to 1,6-beta-glucan in the cell wall. Plays an important role in fungal pathogenesis via its functions in cell wall assembly and regeneration, filamentation, and adherence to host cells. The polypeptide is Crh-like protein CRH11 (CRH11) (Candida albicans (strain SC5314 / ATCC MYA-2876) (Yeast)).